The primary structure comprises 433 residues: Pseudopaline synthase (433 aa).

The helical transmembrane segment at 7-27 (SLGNVLLVGLGAVAIQVALDL) threads the bilayer. Residues 16 to 19 (LGAV), 39 to 40 (NH), and T154 each bind NAD(+). H219 functions as the Proton donor/acceptor in the catalytic mechanism. Residue E364 participates in NAD(+) binding.

Belongs to the staphylopine dehydrogenase family. In terms of assembly, homodimer. Interacts with CntL.

It localises to the cell membrane. The enzyme catalyses pseudopaline + NAD(+) + H2O = (2S)-2-amino-4-{[(1S)-1-carboxy-2-(1H-imidazol-4-yl)ethyl]amino}butanoate + 2-oxoglutarate + NADH + H(+). Functionally, catalyzes the NADH-dependent reductive condensation of alpha-ketoglutarate to the intermediate formed by the adjacently encoded enzyme CntL, namely (2S)-2-amino-4-{[(1S)-1-carboxy-2-(1H-imidazol-4-yl)ethyl]amino}butanoate, leading to the production of pseudopaline. This is the last step in the biosynthesis of the metallophore pseudopaline, which is involved in the acquisition of nickel and zinc, and thus enables bacterial growth inside the host, where metal access is limited. Therefore, this enzyme probably contributes to Pseudomonas virulence. Can use neither pyruvate nor NADPH in place of alpha-ketoglutarate and NADH, respectively. The chain is Pseudopaline synthase from Pseudomonas aeruginosa (strain UCBPP-PA14).